A 205-amino-acid chain; its full sequence is Pectinesterase inhibitor 3 (205 aa).

The N-terminal stretch at 1–25 (MAPTQNLFLVAIAFAVIFTASTVHG) is a signal peptide. Intrachain disulfides connect cysteine 38-cysteine 47 and cysteine 104-cysteine 156.

The protein belongs to the PMEI family. Expressed in apical meristem.

It localises to the secreted. Its subcellular location is the extracellular space. The protein resides in the apoplast. Pectin methylesterase (PME) inhibitor that can target PMEs (e.g. PME2 and PME3) in a pH-dependent manner, mainly in slightly acidic conditions (pH 6.3 and 5.0) but not at pH 7.5; this processus relies on changes in the protonation of amino acids involved in intermolecular and intramolecular interactions. Regulates de-methylesterification of pectins in the apical meristem and affects primordia formation and phyllotactic patterning. In Arabidopsis thaliana (Mouse-ear cress), this protein is Pectinesterase inhibitor 3.